The chain runs to 231 residues: Lipoprotein-releasing system ATP-binding protein LolD 2 (231 aa).

One can recognise an ABC transporter domain in the interval Val-6 to Ala-230. Gly-42–Ser-49 is a binding site for ATP.

The protein belongs to the ABC transporter superfamily. Lipoprotein translocase (TC 3.A.1.125) family. In terms of assembly, the complex is composed of two ATP-binding proteins (LolD) and two transmembrane proteins (LolC and LolE).

The protein resides in the cell inner membrane. Functionally, part of the ABC transporter complex LolCDE involved in the translocation of mature outer membrane-directed lipoproteins, from the inner membrane to the periplasmic chaperone, LolA. Responsible for the formation of the LolA-lipoprotein complex in an ATP-dependent manner. The protein is Lipoprotein-releasing system ATP-binding protein LolD 2 of Rhodospirillum rubrum (strain ATCC 11170 / ATH 1.1.1 / DSM 467 / LMG 4362 / NCIMB 8255 / S1).